Reading from the N-terminus, the 202-residue chain is Endothelin-1 (202 aa).

The first 25 residues, 1–25 (MDYFPVIFSLLFVTFQGAPETAVLG), serve as a signal peptide directing secretion. The propeptide occupies 26 to 50 (AELSTGAENGVQSPPPSTPWRPRRS). Intrachain disulfides connect C53-C67 and C55-C63. The propeptide occupies 74-202 (VNTPERVVPY…DQKLTHNRAH (129 aa)). The segment at 110-124 (CQCAHQKDKKCWNFC) is endothelin-like.

The protein belongs to the endothelin/sarafotoxin family. As to expression, highest expression in the adult is in lung. Lower levels found in heart, kidney, brain and intestine. In the embryo, expressed in outer and inner pharyngeal arch surfaces. Also expressed in endothelium of dorsal aorta and arch arteries, and in epithelium of pharyngeal pouches.

Its subcellular location is the secreted. Functionally, endothelins are endothelium-derived vasoconstrictor peptides. Probable ligand for G-protein coupled receptors EDNRA and EDNRB which activates PTK2B, BCAR1, BCAR3 and, GTPases RAP1 and RHOA cascade in glomerular mesangial cells. Also binds the DEAR/FBXW7-AS1 receptor. Promotes mesenteric arterial wall remodeling via activation of ROCK signaling and subsequent colocalization of NFATC3 with F-actin filaments. NFATC3 then translocates to the nucleus where it subsequently promotes the transcription of the smooth muscle hypertrophy and differentiation marker ACTA2. The chain is Endothelin-1 (Edn1) from Mus musculus (Mouse).